Here is an 818-residue protein sequence, read N- to C-terminus: BDNF/NT-3 growth factors receptor (818 aa).

The signal sequence occupies residues 1–31; the sequence is MVSWRRRPGPGLARLWGLCCLVLGCWRGALG. Disulfide bonds link C32-C38 and C36-C45. Residues 32-426 are Extracellular-facing; sequence CPASCRCSSW…DVSNKENEDS (395 aa). Residue N66 is glycosylated (N-linked (GlcNAc...) asparagine). Residues 71–92 form an LRR 1 repeat; the sequence is YIANQRKLESINDNEVGFYVGL. N-linked (GlcNAc...) asparagine glycosylation is present at N94. Residues 95-116 form an LRR 2 repeat; it reads LTVVDSGLRFVSRQAFVKNINL. N120 carries N-linked (GlcNAc...) asparagine glycosylation. Cystine bridges form between C151-C175 and C153-C193. The region spanning 196 to 281 is the Ig-like C2-type 1 domain; the sequence is PSANLSNYNI…GEVQTSAELT (86 aa). Residues N199, N204, N226, N253, N287, N324, and N337 are each glycosylated (N-linked (GlcNAc...) asparagine). Cysteines 217 and 265 form a disulfide. One can recognise an Ig-like C2-type 2 domain in the interval 295–364; sequence TPDHHWCIPF…NGAYTLLAKN (70 aa). A disulfide bridge connects residues C301 and C344. Residues 384 to 394 form a provides specificity for BDNF as ligand versus NTF3 and NTF4 region; it reads GSGPIVDPDVY. Residues 400-418 are compositionally biased toward polar residues; that stretch reads PNDLGDTTNNSNQITSPDV. A disordered region spans residues 400 to 420; it reads PNDLGDTTNNSNQITSPDVSN. N-linked (GlcNAc...) asparagine glycosylation occurs at N408. A helical membrane pass occupies residues 427–450; the sequence is ITVYVVVGIAALVCTGLVIMLIIL. Over 451–818 the chain is Cytoplasmic; that stretch reads KFGRHSKFGM…ASPVYLDILG (368 aa). The disordered stretch occupies residues 469–494; sequence NDDDSASPLHHISNGSNTPSSSEGGP. Polar residues predominate over residues 481 to 491; sequence SNGSNTPSSSE. Y512 carries the post-translational modification Phosphotyrosine; by autocatalysis. Residues 534-803 enclose the Protein kinase domain; it reads IVLKRELGEG…LNIKEIHSLL (270 aa). ATP-binding positions include 540-548 and K568; that span reads LGEGAFGKV. D672 serves as the catalytic Proton acceptor. Phosphotyrosine; by autocatalysis occurs at positions 698, 702, 703, and 813.

The protein belongs to the protein kinase superfamily. Tyr protein kinase family. Insulin receptor subfamily. In terms of assembly, exists in a dynamic equilibrium between monomeric (low affinity) and dimeric (high affinity) structures. Interacts (phosphorylated upon activation by BDNF) with SHC1; mediates SHC1 phosphorylation and activation. Interacts (phosphorylated upon activation by BDNF) with PLCG1 and/or PLCG2; mediates PLCG1 phosphorylation and activation. Interacts with SH2B1 and SH2B2. Interacts with NGFR; may regulate the ligand specificity of the receptor. Interacts with SORCS2; this interaction is important for normal targeting to post-synaptic densities in response to high-frequency stimulation. Interacts (phosphorylated upon ligand-binding) with SH2D1A; regulates NTRK2. Interacts with SQSTM1 and KIDINS220. Interacts (phosphorylated upon ligand-binding) with FRS2; activates the MAPK signaling pathway. Interacts with APPL1. Interacts with MAPK8IP3/JIP3 and KLC1; interaction with KLC1 is mediated by MAPK8IP3/JIP3. In terms of processing, ligand-mediated auto-phosphorylation. Detected in embryonic brain and orsal root ganglia.

It localises to the cell membrane. The protein localises to the endosome membrane. The protein resides in the cell projection. It is found in the axon. Its subcellular location is the dendrite. It localises to the cytoplasm. The protein localises to the perinuclear region. The protein resides in the postsynaptic density. The enzyme catalyses L-tyrosyl-[protein] + ATP = O-phospho-L-tyrosyl-[protein] + ADP + H(+). Its activity is regulated as follows. The neuronal activity and the influx of calcium positively regulate the kinase activity and the internalization of the receptor which are both important for active signaling. Regulated by NGFR that may control the internalization of the receptor. NGFR may also stimulate the activation by BDNF compared to NTF3 and NTF4. The formation of active receptors dimers able to fully transduce the ligand-mediated signal, may be negatively regulated by the formation of inactive heterodimers with the non-catalytic isoforms. In terms of biological role, receptor tyrosine kinase involved in the development and the maturation of the central and the peripheral nervous systems through regulation of neuron survival, proliferation, migration, differentiation, and synapse formation and plasticity. Receptor for BDNF/brain-derived neurotrophic factor and NTF4/neurotrophin-4. Alternatively can also bind NTF3/neurotrophin-3 which is less efficient in activating the receptor but regulates neuron survival through NTRK2. Upon ligand-binding, undergoes homodimerization, autophosphorylation and activation. Recruits, phosphorylates and/or activates several downstream effectors including SHC1, FRS2, SH2B1, SH2B2 and PLCG1 that regulate distinct overlapping signaling cascades. Through SHC1, FRS2, SH2B1, SH2B2 activates the GRB2-Ras-MAPK cascade that regulates for instance neuronal differentiation including neurite outgrowth. Through the same effectors controls the Ras-PI3 kinase-AKT1 signaling cascade that mainly regulates growth and survival. Through PLCG1 and the downstream protein kinase C-regulated pathways controls synaptic plasticity. Thereby, plays a role in learning and memory by regulating both short term synaptic function and long-term potentiation. PLCG1 also leads to NF-Kappa-B activation and the transcription of genes involved in cell survival. Hence, it is able to suppress anoikis, the apoptosis resulting from loss of cell-matrix interactions. May also play a role in neutrophin-dependent calcium signaling in glial cells and mediate communication between neurons and glia. The chain is BDNF/NT-3 growth factors receptor (NTRK2) from Gallus gallus (Chicken).